Consider the following 131-residue polypeptide: Small ribosomal subunit protein uS8 (131 aa).

Belongs to the universal ribosomal protein uS8 family. In terms of assembly, part of the 30S ribosomal subunit. Contacts proteins S5 and S12.

Its function is as follows. One of the primary rRNA binding proteins, it binds directly to 16S rRNA central domain where it helps coordinate assembly of the platform of the 30S subunit. The protein is Small ribosomal subunit protein uS8 of Chlorobium chlorochromatii (strain CaD3).